Reading from the N-terminus, the 138-residue chain is Biopolymer transport protein exbD1 (138 aa).

Residues 1 to 16 (MIKSSAKHNDFGLTPD) are Cytoplasmic-facing. The chain crosses the membrane as a helical span at residues 17-37 (LTPLLDIIFIVMVFLLLTASV). The Periplasmic portion of the chain corresponds to 38–138 (RLESLEVALP…TQLLTEPSHS (101 aa)).

This sequence belongs to the ExbD/TolR family. In terms of assembly, the accessory proteins ExbB and ExbD seem to form a complex with TonB.

Its subcellular location is the cell inner membrane. Involved in the TonB-dependent energy-dependent transport of various receptor-bound substrates. The protein is Biopolymer transport protein exbD1 (exbD1) of Vibrio cholerae serotype O1 (strain ATCC 39315 / El Tor Inaba N16961).